The following is a 546-amino-acid chain: Chaperonin GroEL (546 aa).

Residues 29–32 (TMGP), Lys-50, 86–90 (DGTTT), Gly-414, and Asp-492 contribute to the ATP site.

Belongs to the chaperonin (HSP60) family. In terms of assembly, forms a cylinder of 14 subunits composed of two heptameric rings stacked back-to-back. Interacts with the co-chaperonin GroES.

The protein localises to the cytoplasm. The catalysed reaction is ATP + H2O + a folded polypeptide = ADP + phosphate + an unfolded polypeptide.. In terms of biological role, together with its co-chaperonin GroES, plays an essential role in assisting protein folding. The GroEL-GroES system forms a nano-cage that allows encapsulation of the non-native substrate proteins and provides a physical environment optimized to promote and accelerate protein folding. This is Chaperonin GroEL from Helicobacter pylori (strain J99 / ATCC 700824) (Campylobacter pylori J99).